The chain runs to 166 residues: Phospholipase A2 inhibitor A1 (166 aa).

Positions 1–19 (MRLILLSGLLLLGIFLANG) are cleaved as a signal peptide. Residues 46–161 (LKGSFLIVHK…CDDNLLVVCE (116 aa)) form the C-type lectin domain. 2 cysteine pairs are disulfide-bonded: C83–C160 and C138–C152. The N-linked (GlcNAc...) asparagine glycan is linked to N122.

It belongs to the alpha-type phospholipase A2 inhibitor family. As to quaternary structure, homotrimer; non-covalently linked. Expressed by the liver.

It localises to the secreted. In terms of biological role, this phospholipase A2 inhibitor binds directly phospholipase A2 in the presence or absence of calcium. The chain is Phospholipase A2 inhibitor A1 from Bothrops neuwiedi (Neuwied's lancehead).